Reading from the N-terminus, the 327-residue chain is uncharacterized protein (327 aa).

Disordered regions lie at residues 127-170 (LSEF…GIYR) and 298-327 (NFED…LKRR). Ser-153, Ser-154, and Ser-309 each carry phosphoserine. Over residues 317–327 (YRKRKKNLKRR) the composition is skewed to basic residues.

This is an uncharacterized protein from Schizosaccharomyces pombe (strain 972 / ATCC 24843) (Fission yeast).